A 486-amino-acid chain; its full sequence is Patatin-like phospholipase domain-containing protein 2 (486 aa).

Residues 1–8 (MFPRETKW) are Cytoplasmic-facing. Residues 9-29 (NISFAGCGFLGVYHIGVASCL) traverse the membrane as a helical segment. The 170-residue stretch at 10–179 (ISFAGCGFLG…SDNLPLYELK (170 aa)) folds into the PNPLA domain. The GXGXXG signature appears at 14 to 19 (GCGFLG). The Extracellular portion of the chain corresponds to 30 to 42 (REHAPFLVANATH). Residue N39 is glycosylated (N-linked (GlcNAc...) asparagine). A helical membrane pass occupies residues 43 to 63 (IYGASAGALTATALVTGACLG). The GXSXG signature appears at 45-49 (GASAG). S47 acts as the Nucleophile in catalysis. Residues 64–137 (EAGANIIEVS…IISHFSSKDE (74 aa)) lie on the Cytoplasmic side of the membrane. Residue K92 forms a Glycyl lysine isopeptide (Lys-Gly) (interchain with G-Cter in ubiquitin) linkage. A helical transmembrane segment spans residues 138–158 (LIQANVCSTFIPVYCGLIPPT). Topologically, residues 159-331 (LQGVRYVDGG…TTLSNMLPVR (173 aa)) are extracellular. D166 functions as the Proton acceptor in the catalytic mechanism. Residues 166–168 (DGG) carry the DGA/G motif. A helical transmembrane segment spans residues 332 to 352 (LATAMMVPYTLPLESAVSFTI). The Cytoplasmic portion of the chain corresponds to 353 to 486 (RLLEWLPDVP…PQDPPGLPPC (134 aa)). S374 bears the Phosphoserine; in vitro mark. Phosphoserine; by PKA occurs at positions 396 and 406. Residues S430 and S468 each carry the phosphoserine; in vitro modification. Residues 465–476 (APASPTAADPAT) show a composition bias toward low complexity. The tract at residues 465–486 (APASPTAADPATPQDPPGLPPC) is disordered. Residues 477–486 (PQDPPGLPPC) are compositionally biased toward pro residues.

In terms of assembly, interacts with ABHD5; this association stimulates PNPLA2 triglyceride hydrolase activity. Interacts with SERPINF1; this interaction stimulates the phospholipase A2 activity of PNPLA2. Despite a colocalization in lipid droplets, it probably does not interact with PLIN. Interacts with PLIN5; prevents interaction with ABHD5. Interacts with FAF2. In terms of processing, phosphorylation at Ser-406 by PKA is increased during fasting and moderate intensity exercise, and moderately increases lipolytic activity. Post-translationally, ubiquitinated by PEX2 in response to reactive oxygen species (ROS), leading to its degradation. Ubiquitination is stimulated by LDAH. In terms of tissue distribution, expressed at high levels in white and brown adipose tissue, and to a lesser degree in testis and cardiac muscle. Barely detected in liver, spleen, thymus, kidney, skeletal muscle, and brain. Among the white adipose depots, gonadal fat showed the highest level of expression compared with inguinal and renal white adipose tissues.

The protein localises to the lipid droplet. The protein resides in the cell membrane. It is found in the cytoplasm. The enzyme catalyses a triacylglycerol + H2O = a diacylglycerol + a fatty acid + H(+). It catalyses the reaction a triacylglycerol + H2O = a 1,2-diacylglycerol + a fatty acid + H(+). It carries out the reaction a triacylglycerol + H2O = a 1,3-diacylglycerol + a fatty acid + H(+). The catalysed reaction is a triacyl-sn-glycerol + H2O = a 2,3-diacyl-sn-glycerol + a fatty acid + H(+). The enzyme catalyses a triacyl-sn-glycerol + H2O = a 1,3-diacyl-sn-glycerol + a fatty acid + H(+). It catalyses the reaction 1,2,3-tri-(9Z-octadecenoyl)-glycerol + H2O = 1,3-di-(9Z-octadecenoyl)-glycerol + (9Z)-octadecenoate + H(+). It carries out the reaction 1,2,3-tri-(9Z)-hexadecenoylglycerol + H2O = 1,3-di-(9Z)-hexadecenoylglycerol + (9Z)-hexadecenoate + H(+). The catalysed reaction is 1,2,3-tri-(9Z,12Z)-octadecadienoylglycerol + H2O = 1,3-di-(9Z,12Z)-octadecadienoylglycerol + (9Z,12Z)-octadecadienoate + H(+). The enzyme catalyses 1,2,3-tri-(9Z,12Z,15Z)-octadecatrienoylglycerol + H2O = 1,3-di-(9Z,12Z,15Z)-octadecatrienoylglycerol + (9Z,12Z,15Z)-octadecatrienoate + H(+). It catalyses the reaction 1,3-di-(9Z)-octadecenoyl-2-hexadecanoylglycerol + H2O = 1,3-di-(9Z-octadecenoyl)-glycerol + hexadecanoate + H(+). It carries out the reaction 1,2-di-(9Z)-octadecenoyl-3-hexadecanoyl-sn-glycerol + H2O = 1-(9Z)-octadecenoyl-3-hexadecanoyl-sn-glycerol + (9Z)-octadecenoate + H(+). The catalysed reaction is 1-hexadecanoyl-2,3-di-(9Z)-octadecenoyl-sn-glycerol + H2O = 1-hexadecanoyl-3-(9Z)-octadecenoyl-sn-glycerol + (9Z)-octadecenoate + H(+). The enzyme catalyses 1,2,3-tri-(9Z-octadecenoyl)-glycerol + H2O = 2,3-di-(9Z)-octadecenoyl-sn-glycerol + (9Z)-octadecenoate + H(+). It catalyses the reaction 1,2,3-tri-(9Z)-hexadecenoylglycerol + H2O = 2,3-di-(9Z)-hexadecenoyl-sn-glycerol + (9Z)-hexadecenoate + H(+). It carries out the reaction 1,2,3-tri-(9Z,12Z)-octadecadienoylglycerol + H2O = 2,3-di-(9Z,12Z)-octadecadienoyl-sn-glycerol + (9Z,12Z)-octadecadienoate + H(+). The catalysed reaction is 1,2,3-tri-(9Z,12Z,15Z)-octadecatrienoylglycerol + H2O = 2,3-di-(9Z,12Z,15Z)-octadecatrienoyl-sn-glycerol + (9Z,12Z,15Z)-octadecatrienoate + H(+). The enzyme catalyses 1,3-di-(9Z)-octadecenoyl-2-hexadecanoylglycerol + H2O = 2-hexadecanoyl-3-(9Z)-octadecenoyl-sn-glycerol + (9Z)-octadecenoate + H(+). It catalyses the reaction 1-hexadecanoyl-2,3-di-(9Z)-octadecenoyl-sn-glycerol + H2O = 2,3-di-(9Z)-octadecenoyl-sn-glycerol + hexadecanoate + H(+). It carries out the reaction 1,2-di-(9Z)-octadecenoyl-3-hexadecanoyl-sn-glycerol + H2O = 2-(9Z-octadecenoyl)-3-hexadecanoyl-sn-glycerol + (9Z)-octadecenoate + H(+). The catalysed reaction is 1,2-di-(9Z-octadecenoyl)-glycerol + (9Z)-octadecenoate + H(+) = 1,2,3-tri-(9Z-octadecenoyl)-glycerol + H2O. The enzyme catalyses a 1-acylglycerol + a 1,3-diacylglycerol = a triacylglycerol + glycerol. It catalyses the reaction a 1-acylglycerol + a 1,2-diacylglycerol = a triacylglycerol + glycerol. It carries out the reaction 2 a 1-acylglycerol = a 1,2-diacylglycerol + glycerol. The catalysed reaction is a triacylglycerol + all-trans-retinol = an all-trans-retinyl ester + a diacylglycerol. The enzyme catalyses 1-(9Z-octadecenoyl)-glycerol + 1,3-di-(9Z-octadecenoyl)-glycerol = 1,2,3-tri-(9Z-octadecenoyl)-glycerol + glycerol. It catalyses the reaction 1-(9Z-octadecenoyl)-glycerol + 1,2-di-(9Z-octadecenoyl)-glycerol = 1,2,3-tri-(9Z-octadecenoyl)-glycerol + glycerol. It carries out the reaction 2 1-(9Z-octadecenoyl)-glycerol = 1,2-di-(9Z-octadecenoyl)-glycerol + glycerol. The catalysed reaction is 1,2,3-tri-(9Z-octadecenoyl)-glycerol + all-trans-retinol = all-trans-retinyl 9Z-octadecenoate + di-(9Z)-octadecenoylglycerol. The enzyme catalyses a 1,2-diacyl-sn-glycero-3-phosphocholine + H2O = a 1-acyl-sn-glycero-3-phosphocholine + a fatty acid + H(+). It catalyses the reaction 1,2,3-tri-(9Z-octadecenoyl)-glycerol + 9-hydroxy-octadecanoate = 9-(9Z-octadecenoyloxy)-octadecanoate + 2,3-di-(9Z)-octadecenoyl-sn-glycerol. It carries out the reaction 1-hexadecanoyl-2,3-di-(9Z)-octadecenoyl-sn-glycerol + 9-hydroxy-octadecanoate = 9-hexadecanoyloxy-octadecanoate + 2,3-di-(9Z)-octadecenoyl-sn-glycerol. The catalysed reaction is 1,2,3-tri-(10Z)-heptadecenoylglycerol + 9-hydroxy-octadecanoate = 2,3-di-(10Z-heptadecenoyl)-sn-glycerol + 9-(10Z-heptadecenoyloxy)-octadecanoate. The enzyme catalyses 1,2,3-tri-(9Z,12Z)-octadecadienoylglycerol + 9-hydroxy-octadecanoate = 2,3-di-(9Z,12Z)-octadecadienoyl-sn-glycerol + 9-(9Z,12Z-octadecadienoyloxy)-octadecanoate. It catalyses the reaction 1,2,3-tri-(9Z)-hexadecenoylglycerol + 9-hydroxy-octadecanoate = 2,3-di-(9Z)-hexadecenoyl-sn-glycerol + 9-(9Z-hexadecenoyloxy)-octadecanoate. It carries out the reaction 9-hydroxy-octadecanoate + 1,2-di-(9Z-octadecenoyl)-sn-glycerol = 9-(9Z-octadecenoyloxy)-octadecanoate + 2-(9Z-octadecenoyl)-glycerol. The catalysed reaction is 1-hexadecanoyl-2,3-di-(9Z)-octadecenoyl-sn-glycerol + 9-hydroxy-octadecanoate = 1-hexadecanoyl-3-(9Z)-octadecenoyl-sn-glycerol + 9-(9Z-octadecenoyloxy)-octadecanoate. It participates in glycerolipid metabolism; triacylglycerol degradation. With respect to regulation, stimulated by PKA-dependent PLIN phosphorylation. Its function is as follows. Catalyzes the initial step in triglyceride hydrolysis in adipocyte and non-adipocyte lipid droplets. Exhibits a strong preference for the hydrolysis of long-chain fatty acid esters at the sn-2 position of the glycerol backbone and acts coordinately with LIPE/HLS and DGAT2 within the lipolytic cascade. Also possesses acylglycerol transacylase and phospholipase A2 activities. Transfers fatty acid from triglyceride to retinol, hydrolyzes retinylesters, and generates 1,3-diacylglycerol from triglycerides. Regulates adiposome size and may be involved in the degradation of adiposomes. Catalyzes the formation of an ester bond between hydroxy fatty acids and fatty acids derived from triglycerides or diglycerides to generate fatty acid esters of hydroxy fatty acids (FAHFAs) in adipocytes. Acts antagonistically with LDAH in regulation of cellular lipid stores. Inhibits LDAH-stimulated lipid droplet fusion. May play an important role in energy homeostasis. May play a role in the response of the organism to starvation, enhancing hydrolysis of triglycerides and providing free fatty acids to other tissues to be oxidized in situations of energy depletion. This is Patatin-like phospholipase domain-containing protein 2 from Mus musculus (Mouse).